A 1252-amino-acid chain; its full sequence is DNA-directed RNA polymerase subunit beta (1252 aa).

The protein belongs to the RNA polymerase beta chain family. The RNAP catalytic core consists of 2 alpha, 1 beta, 1 beta' and 1 omega subunit. When a sigma factor is associated with the core the holoenzyme is formed, which can initiate transcription.

The enzyme catalyses RNA(n) + a ribonucleoside 5'-triphosphate = RNA(n+1) + diphosphate. Its function is as follows. DNA-dependent RNA polymerase catalyzes the transcription of DNA into RNA using the four ribonucleoside triphosphates as substrates. The sequence is that of DNA-directed RNA polymerase subunit beta from Chlamydia pneumoniae (Chlamydophila pneumoniae).